We begin with the raw amino-acid sequence, 1491 residues long: Neurexin-1a (1491 aa).

An N-terminal signal peptide occupies residues Met-1–Ser-27. The Laminin G-like 1 domain occupies Met-28–Cys-208. At Met-28–Thr-1415 the chain is on the extracellular side. In terms of domain architecture, EGF-like 1 spans Asn-198–Ser-236. Intrachain disulfides connect Cys-202-Cys-214, Cys-208-Cys-223, and Cys-225-Cys-235. 2 Laminin G-like domains span residues Met-263–Cys-460 and Asp-467–Cys-661. 3 residues coordinate Ca(2+): Asp-309, Leu-326, and Met-394. Intrachain disulfides connect Cys-424–Cys-460, Cys-632–Cys-661, Cys-669–Cys-680, Cys-674–Cys-689, and Cys-691–Cys-701. An EGF-like 2 domain is found at Pro-665–Glu-702. 2 consecutive Laminin G-like domains span residues Ile-707–Cys-880 and Asp-894–Cys-1069. Intrachain disulfides connect Cys-1041-Cys-1069, Cys-1076-Cys-1087, Cys-1081-Cys-1096, and Cys-1098-Cys-1108. One can recognise an EGF-like 3 domain in the interval Pro-1072–Asn-1109. The 202-residue stretch at Thr-1113 to Ala-1314 folds into the Laminin G-like 6 domain. Residues Gly-1318 to Ile-1408 are disordered. Positions Ser-1322 to Ser-1353 are enriched in low complexity. Residues Asn-1354 to Gln-1364 show a composition bias toward polar residues. A helical membrane pass occupies residues Gly-1416 to Met-1436. Over Tyr-1437–Val-1491 the chain is Cytoplasmic. The tract at residues Ser-1457–Val-1491 is disordered.

It belongs to the neurexin family.

It is found in the membrane. Functionally, neuronal cell surface protein that may be involved in cell recognition and cell adhesion. The sequence is that of Neurexin-1a (nrxn1a) from Danio rerio (Zebrafish).